The following is a 1305-amino-acid chain: Nonribosomal peptide synthetase hkm11 (1305 aa).

An adenylation region spans residues 278 to 672 (TYGELDRWAK…GEIEHHLRPK (395 aa)). The Carrier domain maps to 788 to 864 (APTTEQEALL…SLASRMRQYN (77 aa)). O-(pantetheine 4'-phosphoryl)serine is present on S825. The tract at residues 926–1166 (KGQLDRHQLQ…LCLNITAVRV (241 aa)) is condensation.

This sequence belongs to the NRP synthetase family.

The catalysed reaction is hancockiamide D + (E)-cinnamate + ATP = hancockiamide A + AMP + diphosphate. It catalyses the reaction hancockiamide H + (E)-cinnamate + ATP = hancockiamide G + AMP + diphosphate. The protein operates within secondary metabolite biosynthesis. In terms of biological role, nonribosomal peptide synthetase; part of the gene cluster that mediates the biosynthesis of hancockiamides, an unusual new family of N-cinnamoylated piperazines. The NRPS hkm10 and the NmrA-like reductase hkm9 are proposed to convert two molecules of L-Phe to the intermediary piperazine called xenocockiamide A. Xenocockiamide A is then converted to hancockiamide D via a series of hydroxylations and O-methylations. The tyrosinase hkm6 may catalyze an aromatic hydroxylation, then the 2-oxoglutarate-dependent Fe(II) dioxygenase hkm4 and the FAD-dependent phenol hydroxylase hkm7 may catalyze consecutive hydroxylations to install 2 more hydroxy groups, and the methyltransferase hkm8 probably catalyzes two methylations using 2 molecules of S-adenosyl-L-methionine (SAM). The NRPS hkm11 activates and transfers trans-cinnamate supplied by the PAL hkm12 to hancockiamide D and produces hancockiamide A. NRPS Hkm11 has the flexibility to tolerate the bulky hancockiamide G as a substrate and the absence of the acetyl-transferase hkm3 opens up the opportunity for hkm11 to introduce a second N-cinnamoyl moiety. The cytochrome P450 monooxygenase hkm5 catalyzes the methylenedioxy bridge formation, converting hancockiamide A into hancockiamide G. Hkm5 can also convert hancockiamide B into hancockiamide C, and hancockiamide D into hancockiamide H. The N-acetyltransferase hkm3 finally transfers an acetyl group to 1-N of piperazine, converting hancockiamide A into hancockiamide B and hancockiamide G into hancockiamide C. This chain is Nonribosomal peptide synthetase hkm11, found in Aspergillus hancockii.